Consider the following 303-residue polypeptide: Probable alpha-L-glutamate ligase (303 aa).

In terms of domain architecture, ATP-grasp spans 104-287 (LQLLAREGID…IAGMMIEFIE (184 aa)). Residues Lys141, 178–179 (EY), Asp187, and 211–213 (RSN) contribute to the ATP site. Asp248, Glu260, and Asn262 together coordinate Mg(2+). Positions 248, 260, and 262 each coordinate Mn(2+).

It belongs to the RimK family. Mg(2+) is required as a cofactor. Requires Mn(2+) as cofactor.

This is Probable alpha-L-glutamate ligase from Pectobacterium carotovorum subsp. carotovorum (strain PC1).